The chain runs to 433 residues: Legumain (433 aa).

Residues 1–17 (MVWKVAVFLSAALVIGA) form the signal peptide. Asn91 is a glycosylation site (N-linked (GlcNAc...) asparagine). The active site involves His148. The N-linked (GlcNAc...) asparagine glycan is linked to Asn167. The active-site Nucleophile is Cys189. 2 N-linked (GlcNAc...) asparagine glycosylation sites follow: Asn263 and Asn272. The propeptide occupies 324-433 (DLEESRQLTE…SMDHVCLGHY (110 aa)). 2 disulfide bridges follow: Cys378–Cys412 and Cys390–Cys429.

Belongs to the peptidase C13 family. Homodimer before autocatalytic removal of the propeptide. Monomer after autocatalytic processing. May interact with integrins. In terms of processing, activated by autocatalytic processing at pH 4.

The protein localises to the lysosome. The catalysed reaction is Hydrolysis of proteins and small molecule substrates at -Asn-|-Xaa- bonds.. In terms of biological role, has a strict specificity for hydrolysis of asparaginyl bonds. Can also cleave aspartyl bonds slowly, especially under acidic conditions. Involved in the processing of proteins for MHC class II antigen presentation in the lysosomal/endosomal system. Also involved in MHC class I antigen presentation in cross-presenting dendritic cells by mediating cleavage and maturation of Perforin-2 (MPEG1), thereby promoting antigen translocation in the cytosol. Required for normal lysosomal protein degradation in renal proximal tubules. Required for normal degradation of internalized EGFR. Plays a role in the regulation of cell proliferation via its role in EGFR degradation. The polypeptide is Legumain (LGMN) (Pongo abelii (Sumatran orangutan)).